Reading from the N-terminus, the 479-residue chain is F-box/LRR-repeat protein 16 (479 aa).

The interval 1-62 is disordered; sequence MSSPGIDGDP…PTLPPPSLAA (62 aa). The span at 47 to 60 shows a compositional bias: pro residues; it reads CQPPPPPTLPPPSL. Omega-N-methylarginine is present on Arg-92. The region spanning 94 to 139 is the F-box domain; it reads PLATDEKILNGLFWYFSACEKCVLAQVCKAWRRVLYQPKFWAGLTP. 7 LRR repeats span residues 244–266, 267–290, 319–343, 345–369, 371–395, 396–420, and 446–470; these read ITSLSVSDCINVADDAIAAISQL, LPNLAELSLQAYHVTDTALAYFTA, LPNLTALSLSGCSKVTDDGVELVAE, LRKLRSLDLSWCPRITDMALEYVAC, LHRLEELVLDRCVRITDTGLSYLST, MSSLRSLYLRWCCQVQDFGLKHLLA, and LQELEELELTNCPGATPELFKYFSQ.

As to quaternary structure, interacts with SKP1 and CUL1.

In terms of biological role, substrate-recognition component of the SCF (SKP1-CUL1-F-box protein)-type E3 ubiquitin ligase complex. The protein is F-box/LRR-repeat protein 16 (FBXL16) of Homo sapiens (Human).